A 486-amino-acid polypeptide reads, in one-letter code: Ribosomal protein uS12 methylthiotransferase RimO (486 aa).

Positions 9 to 125 constitute an MTTase N-terminal domain; the sequence is RSVALVTLGC…LSSHLEAILH (117 aa). Cysteine 18, cysteine 54, cysteine 88, cysteine 191, cysteine 195, and cysteine 198 together coordinate [4Fe-4S] cluster. In terms of domain architecture, Radical SAM core spans 177–408; sequence LGSGPWAPVK…RLVEELVTQR (232 aa). The 73-residue stretch at 410–482 folds into the TRAM domain; sequence EERLGEVVEV…GADLLAEPLV (73 aa).

It belongs to the methylthiotransferase family. RimO subfamily. It depends on [4Fe-4S] cluster as a cofactor.

The protein localises to the cytoplasm. It carries out the reaction L-aspartate(89)-[ribosomal protein uS12]-hydrogen + (sulfur carrier)-SH + AH2 + 2 S-adenosyl-L-methionine = 3-methylsulfanyl-L-aspartate(89)-[ribosomal protein uS12]-hydrogen + (sulfur carrier)-H + 5'-deoxyadenosine + L-methionine + A + S-adenosyl-L-homocysteine + 2 H(+). Catalyzes the methylthiolation of an aspartic acid residue of ribosomal protein uS12. The protein is Ribosomal protein uS12 methylthiotransferase RimO of Kineococcus radiotolerans (strain ATCC BAA-149 / DSM 14245 / SRS30216).